The chain runs to 147 residues: MNPAHLLVLSAVCVSLLGAANIPPHPLNLINFMEMIRYTIPCEKTWGEYADYGCYCGAGGSGRPIDALDRCCYVHDNCYGDAEKKHKCNPKTQSYSYKLTKRTIICYGAAGTCGRIVCDCDRTAALCFGNSEYIEGHKNIDTARFCQ.

The N-terminal stretch at 1–19 (MNPAHLLVLSAVCVSLLGA) is a signal peptide. A propeptide spanning residues 20-27 (ANIPPHPL) is cleaved from the precursor. Disulfide bonds link Cys-54/Cys-146, Cys-56/Cys-72, Cys-71/Cys-127, Cys-78/Cys-120, Cys-88/Cys-113, and Cys-106/Cys-118. Ca(2+)-binding residues include Tyr-55, Gly-57, and Gly-59. His-75 is an active-site residue. Residue Asp-76 coordinates Ca(2+). Asp-121 is an active-site residue.

The protein belongs to the phospholipase A2 family. Group I subfamily. D49 sub-subfamily. As to quaternary structure, heterodimer; disulfide-linked. The A chains have phospholipase A2 activity and the B chains show homology with the basic protease inhibitors. The A1 chain is found in beta-1 and beta-2 bungarotoxins. Ca(2+) is required as a cofactor. Expressed by the venom gland.

It is found in the secreted. It catalyses the reaction a 1,2-diacyl-sn-glycero-3-phosphocholine + H2O = a 1-acyl-sn-glycero-3-phosphocholine + a fatty acid + H(+). Snake venom phospholipase A2 (PLA2) that inhibits neuromuscular transmission by blocking acetylcholine release from the nerve termini. PLA2 catalyzes the calcium-dependent hydrolysis of the 2-acyl groups in 3-sn-phosphoglycerides. The polypeptide is Basic phospholipase A2 beta-bungarotoxin A1 chain (Bungarus multicinctus (Many-banded krait)).